A 75-amino-acid chain; its full sequence is Theromacin (75 aa).

5 cysteine pairs are disulfide-bonded: Cys-2/Cys-9, Cys-24/Cys-28, Cys-31/Cys-73, Cys-39/Cys-47, and Cys-57/Cys-59.

The protein belongs to the macin family.

The protein resides in the secreted. Has a bactericial activity. The polypeptide is Theromacin (Hirudo medicinalis (Medicinal leech)).